A 387-amino-acid polypeptide reads, in one-letter code: UDP-Gal:alpha-D-GlcNAc-diphosphoundecaprenol alpha-1,3-galactosyltransferase (387 aa).

This sequence belongs to the glycosyltransferase group 1 family. Glycosyltransferase 4 subfamily. Mg(2+) is required as a cofactor. Requires Mn(2+) as cofactor. Fe(2+) serves as cofactor.

It catalyses the reaction N-acetyl-alpha-D-glucosaminyl-di-trans,octa-cis-undecaprenyl diphosphate + UDP-alpha-D-galactose = alpha-D-Gal-(1-&gt;3)-alpha-D-GlcNAc-di-trans,octa-cis-undecaprenyl diphosphate + UDP + H(+). The protein operates within bacterial outer membrane biogenesis; LPS O-antigen biosynthesis. Its function is as follows. Involved in the biosynthesis of the lipopolysaccharide (LPS) O-antigen region. Catalyzes the transfer of galactose from UDP-galactose to GlcNAc-undecaprenyl diphosphate via an alpha1,3-linkage. Has strict substrate specificity. The polypeptide is UDP-Gal:alpha-D-GlcNAc-diphosphoundecaprenol alpha-1,3-galactosyltransferase (Escherichia coli).